A 451-amino-acid chain; its full sequence is Exodeoxyribonuclease 7 large subunit (451 aa).

It belongs to the XseA family. In terms of assembly, heterooligomer composed of large and small subunits.

It is found in the cytoplasm. The enzyme catalyses Exonucleolytic cleavage in either 5'- to 3'- or 3'- to 5'-direction to yield nucleoside 5'-phosphates.. In terms of biological role, bidirectionally degrades single-stranded DNA into large acid-insoluble oligonucleotides, which are then degraded further into small acid-soluble oligonucleotides. The sequence is that of Exodeoxyribonuclease 7 large subunit from Neisseria meningitidis serogroup A / serotype 4A (strain DSM 15465 / Z2491).